A 498-amino-acid polypeptide reads, in one-letter code: UPF0371 protein cauri_2449 (498 aa).

The protein belongs to the UPF0371 family.

The protein is UPF0371 protein cauri_2449 of Corynebacterium aurimucosum (strain ATCC 700975 / DSM 44827 / CIP 107346 / CN-1) (Corynebacterium nigricans).